A 160-amino-acid polypeptide reads, in one-letter code: Ribonuclease ARB_07070 (160 aa).

The N-terminal stretch at Met1–Ala18 is a signal peptide. The interval Ala26 to Pro51 is disordered. Glu103 (proton acceptor) is an active-site residue. His144 functions as the Proton donor in the catalytic mechanism.

The protein belongs to the ribonuclease U2 family.

It is found in the secreted. Its function is as follows. This purine-specific ribonuclease cleaves 28S RNA in eukaryotic ribosomes, inhibits protein synthesis, and shows antitumor activity. The sequence is that of Ribonuclease ARB_07070 from Arthroderma benhamiae (strain ATCC MYA-4681 / CBS 112371) (Trichophyton mentagrophytes).